Reading from the N-terminus, the 158-residue chain is AP-1 complex subunit sigma-1A (158 aa).

A Phosphoserine modification is found at Ser147.

The protein belongs to the adaptor complexes small subunit family. Adaptor protein complex 1 (AP-1) is a heterotetramer composed of two large adaptins (gamma-type subunit AP1G1 and beta-type subunit AP1B1), a medium adaptin (mu-type subunit AP1M1 or AP1M2) and a small adaptin (sigma-type subunit AP1S1 or AP1S2 or AP1S3). In terms of tissue distribution, widely expressed.

The protein localises to the golgi apparatus. Its subcellular location is the cytoplasmic vesicle membrane. It is found in the membrane. It localises to the clathrin-coated pit. Functionally, subunit of clathrin-associated adaptor protein complex 1 that plays a role in protein sorting in the late-Golgi/trans-Golgi network (TGN) and/or endosomes. The AP complexes mediate both the recruitment of clathrin to membranes and the recognition of sorting signals within the cytosolic tails of transmembrane cargo molecules. This is AP-1 complex subunit sigma-1A (AP1S1) from Homo sapiens (Human).